The primary structure comprises 181 residues: MPDTPKADIPSDNAALEAQGIASELIDDSAARIAELEAKNADLADAYLRAKAEADNIRRRADDDIAKSRKFAVESFAESLLPVKDSLEAAIVSHAAGKGSPEQVIEGVHATLRQLGQALERNKVLEVNPPAGTKFDPHQHQAISVVPAEQEANTVVAVLQKGYLIADRVLRPALVTVAAAK.

This sequence belongs to the GrpE family. Homodimer.

It is found in the cytoplasm. Participates actively in the response to hyperosmotic and heat shock by preventing the aggregation of stress-denatured proteins, in association with DnaK and GrpE. It is the nucleotide exchange factor for DnaK and may function as a thermosensor. Unfolded proteins bind initially to DnaJ; upon interaction with the DnaJ-bound protein, DnaK hydrolyzes its bound ATP, resulting in the formation of a stable complex. GrpE releases ADP from DnaK; ATP binding to DnaK triggers the release of the substrate protein, thus completing the reaction cycle. Several rounds of ATP-dependent interactions between DnaJ, DnaK and GrpE are required for fully efficient folding. The protein is Protein GrpE of Leptothrix cholodnii (strain ATCC 51168 / LMG 8142 / SP-6) (Leptothrix discophora (strain SP-6)).